Here is a 116-residue protein sequence, read N- to C-terminus: UPF0499 protein ATEG_06693 (116 aa).

Positions Met-1–Ala-18 are cleaved as a signal peptide. 3 cysteine pairs are disulfide-bonded: Cys-32-Cys-46, Cys-36-Cys-49, and Cys-42-Cys-54.

The protein belongs to the UPF0499 family.

Its subcellular location is the secreted. This is UPF0499 protein ATEG_06693 from Aspergillus terreus (strain NIH 2624 / FGSC A1156).